The sequence spans 301 residues: Acetyl-coenzyme A carboxylase carboxyl transferase subunit beta (301 aa).

The CoA carboxyltransferase N-terminal domain occupies Leu-25–Pro-294.

It belongs to the AccD/PCCB family. As to quaternary structure, acetyl-CoA carboxylase is a heterohexamer composed of biotin carboxyl carrier protein (AccB), biotin carboxylase (AccC) and two subunits each of ACCase subunit alpha (AccA) and ACCase subunit beta (AccD).

It is found in the cytoplasm. It carries out the reaction N(6)-carboxybiotinyl-L-lysyl-[protein] + acetyl-CoA = N(6)-biotinyl-L-lysyl-[protein] + malonyl-CoA. The protein operates within lipid metabolism; malonyl-CoA biosynthesis; malonyl-CoA from acetyl-CoA: step 1/1. Functionally, component of the acetyl coenzyme A carboxylase (ACC) complex. Biotin carboxylase (BC) catalyzes the carboxylation of biotin on its carrier protein (BCCP) and then the CO(2) group is transferred by the transcarboxylase to acetyl-CoA to form malonyl-CoA. This chain is Acetyl-coenzyme A carboxylase carboxyl transferase subunit beta, found in Brucella abortus (strain 2308).